The following is a 503-amino-acid chain: Glycoprotein 3-alpha-L-fucosyltransferase A (503 aa).

At 1–10 (MRRPKISLKK) the chain is on the cytoplasmic side. The chain crosses the membrane as a helical; Signal-anchor for type II membrane protein span at residues 11–28 (YFYLTLICALLLIFGFSL). Topologically, residues 29–503 (KEREIWKTLS…KDVISDSSDD (475 aa)) are lumenal. The interval 44–71 (ITTQQQQHQHLHQLQSMDEEHPMATSST) is disordered. Low complexity predominate over residues 47 to 58 (QQQQHQHLHQLQ). N-linked (GlcNAc...) asparagine glycosylation is found at Asn262, Asn295, and Asn299.

It belongs to the glycosyltransferase 10 family. Requires Mn(2+) as cofactor.

Its subcellular location is the golgi apparatus. The protein localises to the golgi stack membrane. The catalysed reaction is N(4)-{beta-D-GlcNAc-(1-&gt;2)-alpha-D-Man-(1-&gt;3)-[beta-D-GlcNAc-(1-&gt;2)-alpha-D-Man-(1-&gt;6)]-beta-D-Man-(1-&gt;4)-beta-D-GlcNAc-(1-&gt;4)-beta-D-GlcNAc}-L-asparaginyl-[protein] + GDP-beta-L-fucose = N(4)-{beta-D-GlcNAc-(1-&gt;2)-alpha-D-Man-(1-&gt;3)-[beta-D-GlcNAc-(1-&gt;2)-alpha-D-Man-(1-&gt;6)]-beta-D-Man-(1-&gt;4)-beta-D-GlcNAc-(1-&gt;4)-[alpha-L-Fuc(1-&gt;3)]-beta-D-GlcNAc}-L-asparaginyl-[protein] + GDP + H(+). It functions in the pathway protein modification; protein glycosylation. In terms of biological role, catalyzes alpha-1,3 glycosidic linkages of N-glycans. Plays a role in neuronal development by promoting ventral nerve cord formation, possibly by promoting interactions between migrating cells and the extracellular matrix or by promoting neural activity. The chain is Glycoprotein 3-alpha-L-fucosyltransferase A (FucTA) from Drosophila melanogaster (Fruit fly).